A 709-amino-acid polypeptide reads, in one-letter code: Bud site selection protein 14 (709 aa).

N-acetylserine is present on S2. The disordered stretch occupies residues 61–258; it reads DIINNRPTSG…DYQPLSPPRE (198 aa). 2 stretches are compositionally biased toward polar residues: residues 62–74 and 89–107; these read IINN…SKLT and VTPT…NILS. Composition is skewed to basic and acidic residues over residues 111–123 and 131–150; these read EKGH…RDDD and VEKH…KENS. The residue at position 159 (Y159) is a Phosphotyrosine. Residues S160 and S162 each carry the phosphoserine modification. Phosphothreonine is present on T177. S212 and S222 each carry phosphoserine. Positions 212–226 are enriched in acidic residues; sequence SEDEDEEENYSDDDD. In terms of domain architecture, SH3 spans 259–320; the sequence is LDPDKLYALY…PAEILETFPE (62 aa). Positions 334 to 367 are disordered; sequence SSQSVASSDSKDDSISSGNKNQSDAESIIPTPAL. 3 positions are modified to phosphoserine: S376, S378, and S401. Residues 396 to 406 are compositionally biased toward acidic residues; that stretch reads DTSLDSNDDGG. 4 disordered regions span residues 396–421, 464–510, 525–571, and 600–680; these read DTSL…DNDK, NVKK…SDYD, ANGM…SSRA, and ASLG…PASK. Basic and acidic residues predominate over residues 470-504; that stretch reads RQDNKNESEPKTSSSKDREDDYNANRYVGQEKSEP. At S507 the chain carries Phosphoserine. Over residues 531–552 the composition is skewed to polar residues; sequence SDSQNSLSTIGEFSPSSSEWTN. Low complexity predominate over residues 553–569; it reads ESPSTPIVEESSSIPSS. Polar residues predominate over residues 600–614; it reads ASLGSSGGMANQTDA. The span at 615 to 633 shows a compositional bias: basic and acidic residues; it reads EQPKEELEKHHSTPEEEKQ. S655, S658, and S670 each carry phosphoserine. Low complexity predominate over residues 655-671; that stretch reads SSASINSSLSGSRALSN.

As to quaternary structure, interacts with GLC7.

Important for bud site selection. Seems to be a regulatory subunit of the BUD14-GLC7 type-I phosphatase complex. The BUD14-GLC7 complex is necessary to regulate microtubule dynamics at the cortex and may function as a specific activator of the dynein complex. This chain is Bud site selection protein 14 (BUD14), found in Saccharomyces cerevisiae (strain ATCC 204508 / S288c) (Baker's yeast).